The sequence spans 408 residues: E3 ubiquitin-protein ligase IE2 (408 aa).

Residues 1–10 show a composition bias toward polar residues; sequence MSRQINAATP. Disordered regions lie at residues 1–67 and 176–199; these read MSRQ…ENVQ and QSPDLFASPQSPQPQQQQQQQSEP. Residues 13-25 are compositionally biased toward basic residues; sequence SRRHRLSLSRRRI. Residues 30 to 47 show a composition bias toward low complexity; it reads SPEAQPSSSSRSQPSSSS. Repeat copies occupy residues 34–41, 42–49, 51–54, and 55–58. Residues 34 to 49 form a 2 X 8 AA tandem repeats of Q-P-S-S-S-S-R-S region; sequence QPSSSSRSQPSSSSRS. Residues 51–58 form a 2 X 4 AA tandem repeats of R-R-Q-E region; sequence RRQERRQE. Over residues 183 to 197 the composition is skewed to low complexity; that stretch reads SPQSPQPQQQQQQQS. Residues 207 to 255 form an RING-type zinc finger; sequence CNICFTTFKDTKNVNSSFVTSIHCNHAVCFKCYVKIIMDNSVYKCFCSA.

The protein belongs to the alphabaculovirus IE2 protein family. As to quaternary structure, homooligomer. Post-translationally, auto-ubiquitinated.

It localises to the host nucleus. The catalysed reaction is S-ubiquitinyl-[E2 ubiquitin-conjugating enzyme]-L-cysteine + [acceptor protein]-L-lysine = [E2 ubiquitin-conjugating enzyme]-L-cysteine + N(6)-ubiquitinyl-[acceptor protein]-L-lysine.. In terms of biological role, RING-finger E3 ubiquitin ligase that plays an important regulatory role during the initial stages of infection. Migrates to specific nuclear foci early in infection supposely to prepare the sites for viral transcription and replication by targeting and ubiquitinating host proteins. Acts as a transcriptional activator and activates a number of viral promoters including itself, IE1 and the promoter of 39K gene. The sequence is that of E3 ubiquitin-protein ligase IE2 (IE2) from Lepidoptera (butterflies and moths).